The primary structure comprises 145 residues: Peptide methionine sulfoxide reductase MsrB (145 aa).

The MsrB domain maps to 6-129 (KNERLQQLTD…NSAALRFIPV (124 aa)). Cys118 functions as the Nucleophile in the catalytic mechanism.

Belongs to the MsrB Met sulfoxide reductase family.

The catalysed reaction is L-methionyl-[protein] + [thioredoxin]-disulfide + H2O = L-methionyl-(R)-S-oxide-[protein] + [thioredoxin]-dithiol. In Listeria monocytogenes serotype 4b (strain CLIP80459), this protein is Peptide methionine sulfoxide reductase MsrB.